Consider the following 414-residue polypeptide: Tryptophan synthase beta chain (414 aa).

K109 is modified (N6-(pyridoxal phosphate)lysine).

Belongs to the TrpB family. Tetramer of two alpha and two beta chains. Requires pyridoxal 5'-phosphate as cofactor.

It catalyses the reaction (1S,2R)-1-C-(indol-3-yl)glycerol 3-phosphate + L-serine = D-glyceraldehyde 3-phosphate + L-tryptophan + H2O. It functions in the pathway amino-acid biosynthesis; L-tryptophan biosynthesis; L-tryptophan from chorismate: step 5/5. Functionally, the beta subunit is responsible for the synthesis of L-tryptophan from indole and L-serine. The sequence is that of Tryptophan synthase beta chain from Prochlorococcus marinus (strain AS9601).